The chain runs to 396 residues: Elongation factor Tu (396 aa).

In terms of domain architecture, tr-type G spans 10 to 206 (KPHVNVGTIG…ALDTYIPTPE (197 aa)). The interval 19 to 26 (GHVDHGKT) is G1. Position 19–26 (19–26 (GHVDHGKT)) interacts with GTP. Residue Thr26 participates in Mg(2+) binding. A G2 region spans residues 60–64 (GITIN). The interval 81–84 (DCPG) is G3. Residues 81–85 (DCPGH) and 136–139 (NKAD) each bind GTP. The tract at residues 136-139 (NKAD) is G4. The interval 174–176 (SAK) is G5.

Belongs to the TRAFAC class translation factor GTPase superfamily. Classic translation factor GTPase family. EF-Tu/EF-1A subfamily. As to quaternary structure, monomer.

Its subcellular location is the cytoplasm. The catalysed reaction is GTP + H2O = GDP + phosphate + H(+). Its function is as follows. GTP hydrolase that promotes the GTP-dependent binding of aminoacyl-tRNA to the A-site of ribosomes during protein biosynthesis. The sequence is that of Elongation factor Tu from Bordetella bronchiseptica (strain ATCC BAA-588 / NCTC 13252 / RB50) (Alcaligenes bronchisepticus).